We begin with the raw amino-acid sequence, 740 residues long: Copalyl diphosphate synthase 2 (740 aa).

A substrate-binding site is contributed by K154. 2 residues coordinate Mg(2+): D287 and D289. A DXDD motif motif is present at residues 287–290 (DADD). Residue K373 participates in substrate binding.

The protein belongs to the terpene synthase family. Mg(2+) serves as cofactor.

It carries out the reaction (2E,6E,10E)-geranylgeranyl diphosphate = (+)-copalyl diphosphate. The protein operates within secondary metabolite biosynthesis; terpenoid biosynthesis. In terms of biological role, monofunctional diterpene synthase converting geranylgeranyl diphosphate to copalyl diphosphate. The protein is Copalyl diphosphate synthase 2 (CPS2) of Selaginella moellendorffii (Spikemoss).